The primary structure comprises 951 residues: Zinc fingers and homeoboxes protein 3 (951 aa).

Residues 1–66 (MASKRKSTTP…SSTDGSALAN (66 aa)) form a disordered region. The segment at 1-107 (MASKRKSTTP…SEHTDFNKDP (107 aa)) is required for nuclear localization. A compositionally biased stretch (low complexity) spans 42-58 (PSEAPDASSEAAPNPSS). 2 C2H2-type zinc fingers span residues 77–100 (YCCKECEFRSQDVTHFIGHMNSEH) and 109–132 (FVCTGCSFLAKNPEGLSLHNAKCH). Positions 227-252 (TFINGAAPGSQASAKSTKPPPAANGP) are disordered. The required for homodimerization and interaction with NFYA stretch occupies residues 238–483 (ASAKSTKPPP…LLTACPSITS (246 aa)). The interval 299–497 (LSSIPTYNAA…DANIYKNKKS (199 aa)) is required for repressor activity. 2 DNA-binding regions (homeobox) span residues 300–359 (SSIP…GISW) and 489–548 (ANIY…RNLK). The segment at 492–550 (YKNKKSHEQLSALKGSFCRNQFPGQSEVEHLTKVTGLSTREVRKWFSDRRYHCRNLKGS) is required for nuclear localization. A Phosphoserine modification is found at serine 599. The segment at residues 607–666 (TPTKYKERAPEQLRVLENSFAQNPLPPEEELDRLRSETKMTRREIDGWFSERRKKVNTEE) is a DNA-binding region (homeobox 3). Residues 662-676 (VNTEETKKADGHMPK) show a composition bias toward basic and acidic residues. The tract at residues 662-690 (VNTEETKKADGHMPKEEEEGAEQEGRDEE) is disordered. Residues 677-690 (EEEEGAEQEGRDEE) are compositionally biased toward acidic residues. Phosphoserine is present on residues serine 703 and serine 718. 2 DNA-binding regions (homeobox) span residues 759-818 (PSKV…KNGQ) and 830-889 (FPPG…TRAV). Residues 916-951 (SELSENSESWEPSAPEASSEPFDTSSPQSGRQLEAD) are disordered. Over residues 919-936 (SENSESWEPSAPEASSEP) the composition is skewed to low complexity. A phosphoserine mark is found at serine 922 and serine 941. Residues 937–951 (FDTSSPQSGRQLEAD) are compositionally biased toward polar residues.

The protein belongs to the ZHX family. Homodimer (via homeobox domain 1). Heterodimer with ZHX1 (via homeobox domain 1). Heterodimer with ZHX2 (via homeobox domain 1). Heterodimerization with ZHX1 is a prerequisite for repressor activity. Interacts with NFYA. Ubiquitously expressed.

Its subcellular location is the nucleus. Its function is as follows. Acts as a transcriptional repressor. Involved in the early stages of mesenchymal stem cell (MSC) osteogenic differentiation. Is a regulator of podocyte gene expression during primary glomerula disease. Binds to promoter DNA. The sequence is that of Zinc fingers and homeoboxes protein 3 (Zhx3) from Mus musculus (Mouse).